Reading from the N-terminus, the 258-residue chain is MVLIRVLANLLIIQLSYAQKSSELVIGGDECNINEHRSLVVLFNSSGALCGGTLINQEYVLAAAHCDMPNMQILLGVHSASVLNDDEQARDPEEKYFCLSSNNDTKWDKDIMLIRLNRPVNNSVHIAPLSLPSSPPSVGSVCRIMGWGKTIPTQETHPDVPHCANIKLFHYSLCRAVYVGMPAQSRILCAGILQGGIGSCQGDSGGPLICNGQFQGIVSATSKPCAHSLMPALYIKVFDYTDWIKSIIAGNTTVTCPP.

The N-terminal stretch at 1–18 is a signal peptide; sequence MVLIRVLANLLIIQLSYA. Residues 19-24 constitute a propeptide that is removed on maturation; that stretch reads QKSSEL. One can recognise a Peptidase S1 domain in the interval 25–249; it reads VIGGDECNIN…YTDWIKSIIA (225 aa). Disulfide bonds link Cys31-Cys163, Cys50-Cys66, Cys98-Cys256, Cys142-Cys210, Cys174-Cys189, and Cys200-Cys225. A glycan (N-linked (GlcNAc...) asparagine) is linked at Asn44. The active-site Charge relay system is the His65. The N-linked (GlcNAc...) asparagine glycan is linked to Asn103. Asp110 functions as the Charge relay system in the catalytic mechanism. A glycan (N-linked (GlcNAc...) asparagine) is linked at Asn121. Residue Ser204 is the Charge relay system of the active site. The N-linked (GlcNAc...) asparagine glycan is linked to Asn251.

The protein belongs to the peptidase S1 family. Snake venom subfamily. In terms of assembly, monomer. In terms of tissue distribution, expressed by the venom gland.

The protein localises to the secreted. Functionally, snake venom serine protease that may act in the hemostasis system of the prey. This is Snake venom serine protease CL2 from Trimeresurus stejnegeri (Chinese green tree viper).